We begin with the raw amino-acid sequence, 432 residues long: Trigger factor (432 aa).

The PPIase FKBP-type domain maps to 162 to 247; the sequence is GDLVKFDYQG…VKEVQAPVLP (86 aa).

Belongs to the FKBP-type PPIase family. Tig subfamily.

Its subcellular location is the cytoplasm. It catalyses the reaction [protein]-peptidylproline (omega=180) = [protein]-peptidylproline (omega=0). In terms of biological role, involved in protein export. Acts as a chaperone by maintaining the newly synthesized protein in an open conformation. Functions as a peptidyl-prolyl cis-trans isomerase. The polypeptide is Trigger factor (Thiobacillus denitrificans (strain ATCC 25259 / T1)).